A 290-amino-acid chain; its full sequence is Acetyl-coenzyme A carboxylase carboxyl transferase subunit beta (290 aa).

Residues 28-290 (VMTKCPQCKK…GGGESGWWRN (263 aa)) form the CoA carboxyltransferase N-terminal domain. Zn(2+) contacts are provided by C32, C35, C51, and C54. The C4-type zinc-finger motif lies at 32–54 (CPQCKKIMYTKELVKNLRVCLSC).

It belongs to the AccD/PCCB family. In terms of assembly, acetyl-CoA carboxylase is a heterohexamer composed of biotin carboxyl carrier protein (AccB), biotin carboxylase (AccC) and two subunits each of ACCase subunit alpha (AccA) and ACCase subunit beta (AccD). Zn(2+) serves as cofactor.

Its subcellular location is the cytoplasm. It catalyses the reaction N(6)-carboxybiotinyl-L-lysyl-[protein] + acetyl-CoA = N(6)-biotinyl-L-lysyl-[protein] + malonyl-CoA. It participates in lipid metabolism; malonyl-CoA biosynthesis; malonyl-CoA from acetyl-CoA: step 1/1. Its function is as follows. Component of the acetyl coenzyme A carboxylase (ACC) complex. Biotin carboxylase (BC) catalyzes the carboxylation of biotin on its carrier protein (BCCP) and then the CO(2) group is transferred by the transcarboxylase to acetyl-CoA to form malonyl-CoA. This Geobacillus thermodenitrificans (strain NG80-2) protein is Acetyl-coenzyme A carboxylase carboxyl transferase subunit beta.